The chain runs to 114 residues: Fumarate reductase subunit D (114 aa).

The next 3 membrane-spanning stretches (helical) occupy residues S25–I45, I50–P70, and L94–I114.

The protein belongs to the FrdD family. In terms of assembly, part of an enzyme complex containing four subunits: a flavoprotein (FrdA), an iron-sulfur protein (FrdB), and two hydrophobic anchor proteins (FrdC and FrdD).

The protein resides in the cell inner membrane. In terms of biological role, anchors the catalytic components of the fumarate reductase complex to the cell membrane, binds quinones. This chain is Fumarate reductase subunit D, found in Mannheimia succiniciproducens (strain KCTC 0769BP / MBEL55E).